The following is a 448-amino-acid chain: tRNA-2-methylthio-N(6)-dimethylallyladenosine synthase (448 aa).

Residues 2-119 (KKLYIKTFGC…LSDLIAKRRE (118 aa)) form the MTTase N-terminal domain. Residues cysteine 11, cysteine 48, cysteine 82, cysteine 156, cysteine 160, and cysteine 163 each coordinate [4Fe-4S] cluster. The 236-residue stretch at 142–377 (RQTRGSAYVS…LVESQANQIS (236 aa)) folds into the Radical SAM core domain. One can recognise a TRAM domain in the interval 378–444 (QKMLGNIERV…NYTLRGKLVE (67 aa)).

Belongs to the methylthiotransferase family. MiaB subfamily. As to quaternary structure, monomer. [4Fe-4S] cluster serves as cofactor.

The protein resides in the cytoplasm. It catalyses the reaction N(6)-dimethylallyladenosine(37) in tRNA + (sulfur carrier)-SH + AH2 + 2 S-adenosyl-L-methionine = 2-methylsulfanyl-N(6)-dimethylallyladenosine(37) in tRNA + (sulfur carrier)-H + 5'-deoxyadenosine + L-methionine + A + S-adenosyl-L-homocysteine + 2 H(+). Its function is as follows. Catalyzes the methylthiolation of N6-(dimethylallyl)adenosine (i(6)A), leading to the formation of 2-methylthio-N6-(dimethylallyl)adenosine (ms(2)i(6)A) at position 37 in tRNAs that read codons beginning with uridine. In Polynucleobacter necessarius subsp. necessarius (strain STIR1), this protein is tRNA-2-methylthio-N(6)-dimethylallyladenosine synthase.